The following is a 90-amino-acid chain: MNYFAVLCIFSCICFWQFSDAAPFISVQSSSQARSQKVMNGMLRTLYDYSVQDSVNDATGHLIHTHKADFNSDVMSPDEIESVRQQLNMA.

Positions 1–21 (MNYFAVLCIFSCICFWQFSDA) are cleaved as a signal peptide.

In terms of tissue distribution, main cells of the accessory glands of males.

The protein localises to the secreted. It localises to the extracellular space. Its function is as follows. This protein is transferred from male to female during mating and may affect egglaying and behavior after mating. The sequence is that of Accessory gland-specific peptide 26Ab (Acp26Ab) from Drosophila simulans (Fruit fly).